The sequence spans 354 residues: Uroporphyrinogen decarboxylase (354 aa).

Substrate contacts are provided by residues 25-29, Asp75, Tyr152, Thr207, and His330; that span reads RQAGR.

Belongs to the uroporphyrinogen decarboxylase family. In terms of assembly, homodimer.

Its subcellular location is the cytoplasm. The catalysed reaction is uroporphyrinogen III + 4 H(+) = coproporphyrinogen III + 4 CO2. It participates in porphyrin-containing compound metabolism; protoporphyrin-IX biosynthesis; coproporphyrinogen-III from 5-aminolevulinate: step 4/4. Its function is as follows. Catalyzes the decarboxylation of four acetate groups of uroporphyrinogen-III to yield coproporphyrinogen-III. The chain is Uroporphyrinogen decarboxylase from Xanthomonas euvesicatoria pv. vesicatoria (strain 85-10) (Xanthomonas campestris pv. vesicatoria).